Consider the following 159-residue polypeptide: Mitotic-spindle organizing protein 2 (159 aa).

The tract at residues 87 to 159 (LASDPQDSVP…SGKSNSRSSP (73 aa)) is disordered. The segment covering 91–105 (PQDSVPISLSTSTSE) has biased composition (polar residues). Arg-111 is modified (omega-N-methylarginine). Ser-153 is subject to Phosphoserine.

Belongs to the MOZART2 family. In terms of assembly, associates with the gamma-tubulin ring complex (gTuRC) consisting of TUBGCP2, TUBGCP3, TUBGCP4, TUBGCP5 and TUBGCP6 and gamma-tubulin TUBG1 or TUBG2; within the complex, interacts with TUBGCP2; the interaction plays a role in gTuRC activation.

The protein localises to the cytoplasm. Its subcellular location is the cytoskeleton. The protein resides in the microtubule organizing center. It is found in the centrosome. It localises to the spindle. Required for the recruitment and the assembly of the gamma-tubulin ring complex (gTuRC) at the centrosome. The gTuRC regulates the minus-end nucleation of alpha-beta tubulin heterodimers that grow into microtubule protafilaments, a critical step in centrosome duplication and spindle formation. The sequence is that of Mitotic-spindle organizing protein 2 (Mzt2) from Mus musculus (Mouse).